The sequence spans 1313 residues: MNDRISEVSGSSRARRSVLSYGTTETGSDRYTENSNIATENGVDTASSMIDGIQSGFPQPRHGFEEEYNNAEYINMLEQVFYMYYTDKRHRGVISKKNAEPTETIHDWRMRERLKTVSAALLVCLNIGVDPPDVIKPNPAAKYECWIDPFSLPASKALEAIGKNLQQQYETLSMRTRYRHYLDPAIEEVKKLCIGQRRNAKEERILFHYNGHGVPMPTASGEIWVFNKNYTQYIPVSLYDLQSWLGAPCIYVYDCSAAGNIIVNFNRFAEQRDKEALRIAKQNPNVLAMPSHTSCIQLAACGPKETLPMNPDLPADLFTSCLTSPIEISVRWYVLQNPFPNKLNLNMLLKIPGRLQDRRTPLGELNWIFTAITDTIAWNVFPKHLFRRLFRQDLMVAALFRNFLLAERIMLVHSCHPQSSPELPPTHDHPMWNSWDLAIDNCLSQLPDMLDAESKGIAYEYKHSTFFSEQLTAFEVWLSQGLISRKPPDQLPLVLQVLLSQVHRLRALILLSKFLDLGVWAVDLALSIGIFPYVLKLLQSPAIELKPVLVFIWARILAVDDSCQADLLKDNGYGYFVQILNPNSSIFPSSNISEHRAMCAFILSVFCRGFPQGQLACLNPQVLSHCLSHLNSPDSLLRQWACLCISQLWENYSEAKWSGTRDNAHVKLAEIIVDSVPEVRASVLTAFTTFLGFPEKTEEVVAVETYIAIAALAALSDASPLVRHELVIFLSHFVVNYKKQLMVVAYESSLADILEKKNHNSISASTIYETVWQAVLVLAADPSIEISLAAEAIINYVYQSMLNSELRESFLAFLLQHLPALHKASLSKDTDTNSVTSDPKPHPFVPSVSENKILNRSFSLTRSLKGLALSLAGSDRASELLSLNGENKPAESNLNHLTSAKVPGPPAFNELEYQSELDMPLTSYLFDWSRKYFTEPQMRPNEDDEPGSICYNQRLWRRNRNEKLIYRTRPLAEYSTNGRWNQQLMTFNNTIAPRKLMFHQFEDQLITLGDKDIIQVWDWRRNRCLNSFKTSASATTNVTDMQLLNEDDVALLMTGSSDGTIKLYRDYENEKVELVTSWNSLSDLVFGDRNASLLMSWQQNCGHLLVAGDVRVIRIWDASKEICYANLPVRSSNSITSLTSDLVGCNIIVAGFSDGVLRVYDKRLPARDSLTDVWKEHSSEIVNVEMQSSGMRELISASSDGEVKLWDIRMNHSLQTFSTDNSGLTSLTVHSHAPVYATGSSNQSIKIWDTLGQNINTFRENPRFLNQPKPSSLMCLKFHPHHLLLACGDNTDSRVNLYSCTKNEIHTDSPNEF.

Residues 1–35 are disordered; it reads MNDRISEVSGSSRARRSVLSYGTTETGSDRYTENS. Serine 834, serine 837, and serine 882 each carry phosphoserine. WD repeat units follow at residues 986–1029, 1033–1074, 1087–1126, 1130–1170, 1176–1216, 1219–1259, and 1268–1308; these read TFNN…NSFK, SATT…KVEL, GDRN…CYAN, RSSN…RDSL, EHSS…SLQT, TDNS…NTFR, and PKPS…IHTD.

This sequence belongs to the WD repeat RAPTOR family. As to quaternary structure, the target of rapamycin complex 1 (TORC1) is composed of at least mip1, pop3/wat1, tco89, toc1 and tor2.

It is found in the cytoplasm. Component of TORC1, which regulates multiple cellular processes to control cell growth in response to environmental signals. Tor2 is essential for growth. Nutrient limitation and environmental stress signals cause inactivation of TORC1. Active TORC1 positively controls cell growth and ribosome biogenesis by regulating ribosomal protein gene expression. TORC1 negatively controls G1 cell-cycle arrest, sexual development and amino acid uptake. Represses mating, meiosis and sporulation efficiency by interfering with the functions of the transcription factor ste11 and the meiosis-promoting RNA-binding protein mei2. This chain is Target of rapamycin complex 1 subunit mip1, found in Schizosaccharomyces pombe (strain 972 / ATCC 24843) (Fission yeast).